Consider the following 151-residue polypeptide: MFGGAHELSIDSKGRLAVPAKFRDILSRLYTPAVVVTLESKHKLLMYPVAEWEKVAAQLLNLKVADNPVLRRFQNLLLHNAEILEWDSAGRVLVPAGLRKRVDFDREVVLVGRANRLELWGREQWEAEMVQALDDDPDELAFQLGQTDLQL.

SpoVT-AbrB domains follow at residues 5–51 (AHEL…PVAE) and 81–124 (AEIL…GREQ).

It belongs to the MraZ family. As to quaternary structure, forms oligomers.

The protein localises to the cytoplasm. It localises to the nucleoid. This Neisseria meningitidis serogroup A / serotype 4A (strain DSM 15465 / Z2491) protein is Transcriptional regulator MraZ.